The following is a 450-amino-acid chain: Transcription factor AP-2 gamma (450 aa).

Lysine 10 is covalently cross-linked (Glycyl lysine isopeptide (Lys-Gly) (interchain with G-Cter in SUMO)). Disordered regions lie at residues 13-63 (EDCE…FPPP) and 90-126 (LHQP…GLLP). The PPxY motif signature appears at 59 to 64 (YFPPPY). The segment covering 95–110 (PTGSQQQAWPGRQSQE) has biased composition (polar residues). Serine 252 is modified (phosphoserine; by PKA). The interval 293–424 (RRKAAHVTLL…YIKEALIVID (132 aa)) is H-S-H (helix-span-helix), dimerization. The disordered stretch occupies residues 431–450 (GDQSPADSNKTLEKMEKHRK). Serine 434 bears the Phosphoserine mark. The span at 440-450 (KTLEKMEKHRK) shows a compositional bias: basic and acidic residues.

It belongs to the AP-2 family. Binds DNA as a dimer. Can form homodimers or heterodimers with other AP-2 family members. Interacts with WWOX. Interacts with UBE2I. Interacts with KCTD1; this interaction represses transcription activation. Interacts with CITED2 (via C-terminus); the interaction stimulates TFAP2B-transcriptional activity. Interacts with CITED4. Interacts with MTA1. Sumoylated on Lys-10; which inhibits transcriptional activity.

The protein resides in the nucleus. Functionally, sequence-specific DNA-binding transcription factor that interacts with cellular enhancer elements to regulate transcription of selected genes, and which plays a key role in early embryonic development. AP-2 factors bind to the consensus sequence 5'-GCCNNNGGC-3' and activate genes involved in a large spectrum of important biological functions. TFAP2C plays a key role in early embryonic development by regulating both inner cell mass (ICM) and trophectoderm differentiation. At the 8-cell stage, during morula development, controls expression of cell-polarity genes. Upon trophoblast commitment, binds to late trophectoderm genes in blastocysts together with CDX2, and later to extra-embryonic ectoderm genes together with SOX2. Binds to both closed and open chromatin with other transcription factors. Involved in the MTA1-mediated epigenetic regulation of ESR1 expression in breast cancer. The polypeptide is Transcription factor AP-2 gamma (TFAP2C) (Homo sapiens (Human)).